Here is a 237-residue protein sequence, read N- to C-terminus: Thiamine-phosphate synthase (237 aa).

Residues 57-61 (QLRDK) and N98 contribute to the 4-amino-2-methyl-5-(diphosphooxymethyl)pyrimidine site. The Mg(2+) site is built by D99 and D118. S136 is a binding site for 4-amino-2-methyl-5-(diphosphooxymethyl)pyrimidine. Residue 162–164 (TPT) coordinates 2-[(2R,5Z)-2-carboxy-4-methylthiazol-5(2H)-ylidene]ethyl phosphate. K165 contributes to the 4-amino-2-methyl-5-(diphosphooxymethyl)pyrimidine binding site. Residue G193 participates in 2-[(2R,5Z)-2-carboxy-4-methylthiazol-5(2H)-ylidene]ethyl phosphate binding.

Belongs to the thiamine-phosphate synthase family. Mg(2+) serves as cofactor.

The enzyme catalyses 2-[(2R,5Z)-2-carboxy-4-methylthiazol-5(2H)-ylidene]ethyl phosphate + 4-amino-2-methyl-5-(diphosphooxymethyl)pyrimidine + 2 H(+) = thiamine phosphate + CO2 + diphosphate. The catalysed reaction is 2-(2-carboxy-4-methylthiazol-5-yl)ethyl phosphate + 4-amino-2-methyl-5-(diphosphooxymethyl)pyrimidine + 2 H(+) = thiamine phosphate + CO2 + diphosphate. It carries out the reaction 4-methyl-5-(2-phosphooxyethyl)-thiazole + 4-amino-2-methyl-5-(diphosphooxymethyl)pyrimidine + H(+) = thiamine phosphate + diphosphate. The protein operates within cofactor biosynthesis; thiamine diphosphate biosynthesis; thiamine phosphate from 4-amino-2-methyl-5-diphosphomethylpyrimidine and 4-methyl-5-(2-phosphoethyl)-thiazole: step 1/1. In terms of biological role, condenses 4-methyl-5-(beta-hydroxyethyl)thiazole monophosphate (THZ-P) and 2-methyl-4-amino-5-hydroxymethyl pyrimidine pyrophosphate (HMP-PP) to form thiamine monophosphate (TMP). In Mycolicibacterium gilvum (strain PYR-GCK) (Mycobacterium gilvum (strain PYR-GCK)), this protein is Thiamine-phosphate synthase.